A 170-amino-acid chain; its full sequence is Protein SprT (170 aa).

Residues 22 to 163 (LQQANLTLQT…RCRRCGKTLR (142 aa)) form the SprT-like domain. Residue His-78 participates in Zn(2+) binding. Glu-79 is an active-site residue. Position 82 (His-82) interacts with Zn(2+).

It belongs to the SprT family. Requires Zn(2+) as cofactor.

It localises to the cytoplasm. The sequence is that of Protein SprT from Pectobacterium atrosepticum (strain SCRI 1043 / ATCC BAA-672) (Erwinia carotovora subsp. atroseptica).